The following is a 392-amino-acid chain: Probable protein phosphatase 2C 22 (392 aa).

Residues 1–26 (MEETRGISDPENGSSSYGGKPPNPLS) form a disordered region. The 268-residue stretch at 89–356 (RSGAWSDIGS…DNVTAVVVCL (268 aa)) folds into the PPM-type phosphatase domain. Mn(2+)-binding residues include D133, G134, D304, and D347.

Belongs to the PP2C family. Mg(2+) is required as a cofactor. It depends on Mn(2+) as a cofactor.

It catalyses the reaction O-phospho-L-seryl-[protein] + H2O = L-seryl-[protein] + phosphate. It carries out the reaction O-phospho-L-threonyl-[protein] + H2O = L-threonyl-[protein] + phosphate. This is Probable protein phosphatase 2C 22 from Arabidopsis thaliana (Mouse-ear cress).